The sequence spans 166 residues: Interferon gamma (166 aa).

The first 23 residues, 1–23 (MNYTSYILAFQLCVILCSSGYYC), serve as a signal peptide directing secretion. The residue at position 24 (Gln24) is a Pyrrolidone carboxylic acid. N-linked (GlcNAc...) asparagine glycans are attached at residues Asn39 and Asn106.

It belongs to the type II (or gamma) interferon family. In terms of assembly, homodimer. Interacts with IFNGR1 (via extracellular domain); this interaction promotes IFNGR1 dimerization. Released primarily from activated T lymphocytes.

It is found in the secreted. Its function is as follows. Type II interferon produced by immune cells such as T-cells and NK cells that plays crucial roles in antimicrobial, antiviral, and antitumor responses by activating effector immune cells and enhancing antigen presentation. Primarily signals through the JAK-STAT pathway after interaction with its receptor IFNGR1 to affect gene regulation. Upon IFNG binding, IFNGR1 intracellular domain opens out to allow association of downstream signaling components JAK2, JAK1 and STAT1, leading to STAT1 activation, nuclear translocation and transcription of IFNG-regulated genes. Many of the induced genes are transcription factors such as IRF1 that are able to further drive regulation of a next wave of transcription. Plays a role in class I antigen presentation pathway by inducing a replacement of catalytic proteasome subunits with immunoproteasome subunits. In turn, increases the quantity, quality, and repertoire of peptides for class I MHC loading. Increases the efficiency of peptide generation also by inducing the expression of activator PA28 that associates with the proteasome and alters its proteolytic cleavage preference. Up-regulates as well MHC II complexes on the cell surface by promoting expression of several key molecules such as cathepsins B/CTSB, H/CTSH, and L/CTSL. Participates in the regulation of hematopoietic stem cells during development and under homeostatic conditions by affecting their development, quiescence, and differentiation. The polypeptide is Interferon gamma (IFNG) (Ailuropoda melanoleuca (Giant panda)).